The following is a 494-amino-acid chain: Lysine--tRNA ligase (494 aa).

2 residues coordinate Mg(2+): Glu407 and Glu414.

This sequence belongs to the class-II aminoacyl-tRNA synthetase family. As to quaternary structure, homodimer. Mg(2+) serves as cofactor.

Its subcellular location is the cytoplasm. It catalyses the reaction tRNA(Lys) + L-lysine + ATP = L-lysyl-tRNA(Lys) + AMP + diphosphate. In Lactococcus lactis subsp. lactis (strain IL1403) (Streptococcus lactis), this protein is Lysine--tRNA ligase.